We begin with the raw amino-acid sequence, 190 residues long: MNILTLILSYLIGSISFALIVGKMFYKKDIRDYGSGNLGATNAYRVLGIKAGVIVAIADILKGTFACLLPLILSSTINPIVCGLLAILGHIFSVFASFKGGKAVATATGVFLFLSPLGVLVGFVVFVLTLLFTKYVSLSSMLAGIALFIYSLIFEDKVIIALSLLIIVSIIILHRQNIKRILNGTENKIV.

Helical transmembrane passes span 1–21 (MNILTLILSYLIGSISFALIV), 53–73 (VIVAIADILKGTFACLLPLIL), 76–96 (TINPIVCGLLAILGHIFSVFA), 110–130 (VFLFLSPLGVLVGFVVFVLTL), and 152–172 (LIFEDKVIIALSLLIIVSIII).

The protein belongs to the PlsY family. In terms of assembly, probably interacts with PlsX.

The protein resides in the cell membrane. The enzyme catalyses an acyl phosphate + sn-glycerol 3-phosphate = a 1-acyl-sn-glycero-3-phosphate + phosphate. It functions in the pathway lipid metabolism; phospholipid metabolism. In terms of biological role, catalyzes the transfer of an acyl group from acyl-phosphate (acyl-PO(4)) to glycerol-3-phosphate (G3P) to form lysophosphatidic acid (LPA). This enzyme utilizes acyl-phosphate as fatty acyl donor, but not acyl-CoA or acyl-ACP. The polypeptide is Glycerol-3-phosphate acyltransferase 2 (Bacillus anthracis).